Consider the following 185-residue polypeptide: NADH-quinone oxidoreductase subunit B (185 aa).

Cys-38, Cys-39, Cys-104, and Cys-133 together coordinate [4Fe-4S] cluster. The segment covering Ala-165–Ala-176 has biased composition (basic and acidic residues). Positions Ala-165–Ser-185 are disordered.

The protein belongs to the complex I 20 kDa subunit family. As to quaternary structure, NDH-1 is composed of 14 different subunits. Subunits NuoB, C, D, E, F, and G constitute the peripheral sector of the complex. [4Fe-4S] cluster is required as a cofactor.

It localises to the cell membrane. It catalyses the reaction a quinone + NADH + 5 H(+)(in) = a quinol + NAD(+) + 4 H(+)(out). NDH-1 shuttles electrons from NADH, via FMN and iron-sulfur (Fe-S) centers, to quinones in the respiratory chain. The immediate electron acceptor for the enzyme in this species is believed to be ubiquinone. Couples the redox reaction to proton translocation (for every two electrons transferred, four hydrogen ions are translocated across the cytoplasmic membrane), and thus conserves the redox energy in a proton gradient. The protein is NADH-quinone oxidoreductase subunit B of Thermomicrobium roseum (strain ATCC 27502 / DSM 5159 / P-2).